The following is a 550-amino-acid chain: Chaperonin GroEL (550 aa).

ATP contacts are provided by residues 30 to 33, Lys-51, 87 to 91, Gly-415, and Asp-496; these read TLGP and DGTTT.

Belongs to the chaperonin (HSP60) family. As to quaternary structure, forms a cylinder of 14 subunits composed of two heptameric rings stacked back-to-back. Interacts with the co-chaperonin GroES.

Its subcellular location is the cytoplasm. The enzyme catalyses ATP + H2O + a folded polypeptide = ADP + phosphate + an unfolded polypeptide.. In terms of biological role, together with its co-chaperonin GroES, plays an essential role in assisting protein folding. The GroEL-GroES system forms a nano-cage that allows encapsulation of the non-native substrate proteins and provides a physical environment optimized to promote and accelerate protein folding. This chain is Chaperonin GroEL, found in Rickettsia prowazekii (strain Madrid E).